The primary structure comprises 141 residues: Acetyltransferase YpeA (141 aa).

One can recognise an N-acetyltransferase domain in the interval 1–141 (MEIRVFRQED…GKRLIEDEEY (141 aa)).

The protein belongs to the acetyltransferase family. YpeA subfamily.

The sequence is that of Acetyltransferase YpeA from Salmonella choleraesuis (strain SC-B67).